The chain runs to 392 residues: Galactokinase (392 aa).

The alpha-D-galactose site is built by arginine 37, glutamate 43, histidine 44, and aspartate 46. ATP contacts are provided by glycine 136, glycine 138, serine 140, and serine 141. Aspartate 186 contacts alpha-D-galactose. Catalysis depends on aspartate 186, which acts as the Proton acceptor. Serine 230 is subject to Phosphoserine. Position 236 (tyrosine 236) interacts with alpha-D-galactose.

Belongs to the GHMP kinase family. GalK subfamily. Homodimer.

The catalysed reaction is alpha-D-galactose + ATP = alpha-D-galactose 1-phosphate + ADP + H(+). The protein operates within carbohydrate metabolism; galactose metabolism. In terms of biological role, catalyzes the transfer of a phosphate from ATP to alpha-D-galactose and participates in the first committed step in the catabolism of galactose. This chain is Galactokinase (GALK1), found in Bos taurus (Bovine).